A 192-amino-acid chain; its full sequence is Protein GrpE (192 aa).

It belongs to the GrpE family. As to quaternary structure, homodimer.

Its subcellular location is the cytoplasm. In terms of biological role, participates actively in the response to hyperosmotic and heat shock by preventing the aggregation of stress-denatured proteins, in association with DnaK and GrpE. It is the nucleotide exchange factor for DnaK and may function as a thermosensor. Unfolded proteins bind initially to DnaJ; upon interaction with the DnaJ-bound protein, DnaK hydrolyzes its bound ATP, resulting in the formation of a stable complex. GrpE releases ADP from DnaK; ATP binding to DnaK triggers the release of the substrate protein, thus completing the reaction cycle. Several rounds of ATP-dependent interactions between DnaJ, DnaK and GrpE are required for fully efficient folding. This chain is Protein GrpE, found in Neisseria gonorrhoeae (strain NCCP11945).